The following is an 81-amino-acid chain: Small ribosomal subunit protein bS16 (81 aa).

The protein belongs to the bacterial ribosomal protein bS16 family.

This is Small ribosomal subunit protein bS16 from Neisseria meningitidis serogroup C (strain 053442).